The following is a 103-amino-acid chain: MAAKIRQNDEVIVLAGKDKGKRGKVTKVLPNGKVFVEGVNIITKHEKPVPALGKAGGLVKKEAAIDVSNVAIFNPTTNKADRVGFRIEDGKKVRFFKSNNEII.

Belongs to the universal ribosomal protein uL24 family. Part of the 50S ribosomal subunit.

Functionally, one of two assembly initiator proteins, it binds directly to the 5'-end of the 23S rRNA, where it nucleates assembly of the 50S subunit. In terms of biological role, one of the proteins that surrounds the polypeptide exit tunnel on the outside of the subunit. The chain is Large ribosomal subunit protein uL24 from Histophilus somni (strain 129Pt) (Haemophilus somnus).